Reading from the N-terminus, the 305-residue chain is Zinc transporter ZIP9 (305 aa).

Residues 7–27 (ICLLSLAMLVACYVAGIIPLA) form a helical membrane-spanning segment. Residue Asn29 is glycosylated (N-linked (GlcNAc...) asparagine). The next 5 helical transmembrane spans lie at 35 to 55 (LKLVTVLGAGLLCGTALAVIV), 104 to 124 (AYIGVSLVLGFVFMLLVDQIG), 144 to 164 (ITTTLGLVVHAAADGVALGAA), 174 to 194 (LIVFVAIMLHKAPAAFGLVSF), and 208 to 228 (HLLVFALAAPVMSMVTYLGLS). N-linked (GlcNAc...) asparagine glycosylation occurs at Asn239. The next 2 helical transmembrane spans lie at 242–262 (GVAMLFSAGTFLYVATVHVLP) and 284–304 (LEVAALVLGCLIPLVLSIGHH).

This sequence belongs to the ZIP transporter (TC 2.A.5) family.

It is found in the golgi apparatus. Its subcellular location is the trans-Golgi network membrane. It localises to the cell membrane. The protein resides in the cytoplasm. The protein localises to the perinuclear region. It is found in the mitochondrion. Its subcellular location is the nucleus. The enzyme catalyses Zn(2+)(in) = Zn(2+)(out). Its function is as follows. Transports zinc ions across cell and organelle membranes into the cytoplasm and regulates intracellular zinc homeostasis. Participates in the zinc ions efflux out of the secretory compartments. Regulates intracellular zinc level, resulting in the enhancement of AKT1 and MAPK3/MAPK1 (Erk1/2) phosphorylation in response to the BCR activation. Also functions as a membrane androgen receptor that mediates, through a G protein, the non-classical androgen signaling pathway, characterized by the activation of MAPK3/MAPK1 (Erk1/2) and transcription factors CREB1 or ATF1. Moreover, has dual functions as a membrane-bound androgen receptor and as an androgen-dependent zinc transporter both of which are mediated through an inhibitory G protein (Gi) that mediates both MAP kinase and zinc signaling leading to the androgen-dependent apoptotic process. The sequence is that of Zinc transporter ZIP9 from Gallus gallus (Chicken).